A 1506-amino-acid polypeptide reads, in one-letter code: Transient receptor potential cation channel subfamily M member 2 (1506 aa).

Positions 1–11 (MESLDRRRTGS) are enriched in basic and acidic residues. Residues 1 to 22 (MESLDRRRTGSEQEEGFGVQSR) form a disordered region. The Cytoplasmic portion of the chain corresponds to 1–750 (MESLDRRRTG…WWGQLCVDNG (750 aa)). Residues Thr-173, Asn-178, Arg-301, Gly-332, and Thr-335 each coordinate ADP-D-ribose. Thr-738 is modified (phosphothreonine). The stretch at 751–767 (LWRIILCMLAFPLLFTG) is an intramembrane region. Over 768–792 (FISFREKRLQALCRPARVRAFFNAP) the chain is Cytoplasmic. The chain crosses the membrane as a helical span at residues 793-813 (VVIFHMNILSYFAFLCLFAYV). The Extracellular portion of the chain corresponds to 814–824 (LMVDFQPSPSW). The chain crosses the membrane as a helical span at residues 825 to 845 (CEYLIYLWLFSLVCEETRQLF). Residues Glu-840 and Gln-843 each coordinate Ca(2+). The Cytoplasmic segment spans residues 846-864 (YDPDGCGLMKMASLYFSDF). A helical transmembrane segment spans residues 865–885 (WNKLDVGAILLFIVGLTCRLI). Asn-866 is a Ca(2+) binding site. Over 886–893 (PATLYPGR) the chain is Extracellular. Residues 894-914 (IILSLDFIMFCLRLMHIFTIS) form a helical membrane-spanning segment. At 915 to 926 (KTLGPKIIIVKR) the chain is on the cytoplasmic side. Residues 927–947 (MMKDVFFFLFLLAVWVVSFGV) form a helical membrane-spanning segment. At 948-967 (AKQAILIHNESRVDWIFRGV) the chain is on the extracellular side. The segment at residues 968–982 (VYHSYLTIFGQIPTY) is an intramembrane region (pore-forming). Residues 976 to 979 (FGQI) carry the Selectivity filter motif. At 983-1019 (IDGVNFSMDQCSPNGTDPYKPKCPESDWTGQAPAFPE) the chain is on the extracellular side. A disulfide bridge connects residues Cys-993 and Cys-1005. Residues 1020–1041 (WLTVTLLCLYLLFANILLLNLL) traverse the membrane as a helical segment. The Cytoplasmic portion of the chain corresponds to 1042-1076 (IAMFNYTFQEVQEHTDQIWKFQRHDLIEEYHGRPP). Glu-1070 contacts Ca(2+). Residues 1077–1095 (APPPLILLSHLQLLIKRIV) lie within the membrane without spanning it. Residues 1096-1506 (LKIPAKRHKQ…KVASLFGAHF (411 aa)) lie on the Cytoplasmic side of the membrane. Residues 1350 to 1501 (RWKRNQGGAI…KTILQKVASL (152 aa)) enclose the Nudix hydrolase domain. Position 1378 (Ser-1378) interacts with ADP-D-ribose. The short motif at 1386–1407 (GSREPGEMLPRKLKRVLRQEFW) is the Nudix box element. Residues Asp-1427, Arg-1429, Tyr-1488, and Asn-1490 each contribute to the ADP-D-ribose site.

Belongs to the transient receptor (TC 1.A.4) family. LTrpC subfamily. TRPM2 sub-subfamily. Homotetramer. Post-translationally, protein kinase C (PKC)-mediated phosphorylation of TRPM2 at Thr-738 counteracts the effect of cytosolic Ca(2+) and elevates the temperature threshold. As to expression, detected in the preoptic area of the hypothalamus, a brain area involved in body temperature control. Detected in beta-cells in pancreas islets (at protein level). Detected in brain cortex, striatum, hippocampus CA1, CA2 and CA3 layers, and in the Purkinje cell layer in cerebellum. Widely expressed, with highest levels in lung, spleen, eye and brain. Detected in dendritic cells and in polymorphonuclear neutrophils.

The protein localises to the cell membrane. Its subcellular location is the perikaryon. It is found in the cell projection. It localises to the cytoplasmic vesicle. The protein resides in the lysosome. The enzyme catalyses Ca(2+)(in) = Ca(2+)(out). It catalyses the reaction Na(+)(in) = Na(+)(out). With respect to regulation, activated by intracellular ADP-ribose, beta-NAD (NAD(+)) and similar compounds, and by oxidative stress caused by reactive oxygen or nitrogen species. Ca(2+) and PI(4,5)P2 are required for channel opening by ADP-ribose. Activated by moderate heat (35 to 40 degrees Celsius). Activation by ADP-ribose and beta-NAD is strongly increased by moderate heat (35 to 40 degrees Celsius). Likewise, reactive oxygen species lower the threshold for activation by moderate heat (37 degrees Celsius). Inactivated by exposure to extracellular pH between 4.0 and 6.5; irreversibly inactivated when open channels are exposed to extracellular pH between 4.0 and 6.5, while pre-exposure of closed channels to extracellular pH 5.5 gives rise to currents that rapidly inactivate, but protects against irreversible inactivation. Inactivated by intracellular ATP. Activated by arachidonic acid. Inhibited by 2-aminoethyl diphenylborinate (2-APB). Its function is as follows. Nonselective, voltage-independent cation channel that mediates Na(+) and Ca(2+) influx, leading to increased cytoplasmic Ca(2+) levels. Functions as a ligand-gated ion channel, gated by intracellular adenosine diphosphate ribose (ADP-ribose), Ca(2+), warm temperature, and oxidative stress. The precise physiological activators are under debate; the true, physiological activators may be ADP-ribose and ADP-ribose-2'-phosphate. Binding of ADP-ribose to the cytoplasmic Nudix domain causes a conformation change; the channel is primed but still requires Ca(2+) binding to trigger channel opening. Extracellular Ca(2+) passes through the channel and increases channel activity. Also contributes to Ca(2+) release from intracellular stores in response to ADP-ribose. Plays a role in numerous processes that involve signaling via intracellular Ca(2+) levels. Besides, mediates the release of lysosomal Zn(2+) stores in response to reactive oxygen species, leading to increased cytosolic Zn(2+) levels. Plays a role in mediating behavorial and physiological responses to moderate heat and thereby contributes to body temperature homeostasis. Plays a role in insulin secretion, a process that requires increased cytoplasmic Ca(2+) levels. Required for normal IFNG and cytokine secretion and normal innate immune immunity in response to bacterial infection. Required for normal phagocytosis and cytokine release by macrophages exposed to zymosan (in vitro). Plays a role in dendritic cell differentiation and maturation, and in dendritic cell chemotaxis via its role in regulating cytoplasmic Ca(2+) levels. Plays a role in the regulation of the reorganization of the actin cytoskeleton and filopodia formation in response to reactive oxygen species via its function in increasing cytoplasmic Ca(2+) and Zn(2+) levels. Confers susceptibility to cell death following oxidative stress. The protein is Transient receptor potential cation channel subfamily M member 2 (Trpm2) of Mus musculus (Mouse).